Consider the following 602-residue polypeptide: UvrABC system protein C (602 aa).

Residues Thr-17–Ile-94 form the GIY-YIG domain. Positions Ser-199–Ile-234 constitute a UVR domain.

This sequence belongs to the UvrC family. As to quaternary structure, interacts with UvrB in an incision complex.

It is found in the cytoplasm. Its function is as follows. The UvrABC repair system catalyzes the recognition and processing of DNA lesions. UvrC both incises the 5' and 3' sides of the lesion. The N-terminal half is responsible for the 3' incision and the C-terminal half is responsible for the 5' incision. This Borrelia turicatae (strain 91E135) protein is UvrABC system protein C.